We begin with the raw amino-acid sequence, 75 residues long: UPF0270 protein PFL_4336 (75 aa).

Belongs to the UPF0270 family.

This chain is UPF0270 protein PFL_4336, found in Pseudomonas fluorescens (strain ATCC BAA-477 / NRRL B-23932 / Pf-5).